The chain runs to 229 residues: Putative N-acetylmannosamine-6-phosphate 2-epimerase 2 (229 aa).

It belongs to the NanE family.

It catalyses the reaction an N-acyl-D-glucosamine 6-phosphate = an N-acyl-D-mannosamine 6-phosphate. Its pathway is amino-sugar metabolism; N-acetylneuraminate degradation; D-fructose 6-phosphate from N-acetylneuraminate: step 3/5. In terms of biological role, converts N-acetylmannosamine-6-phosphate (ManNAc-6-P) to N-acetylglucosamine-6-phosphate (GlcNAc-6-P). The sequence is that of Putative N-acetylmannosamine-6-phosphate 2-epimerase 2 from Salmonella paratyphi A (strain ATCC 9150 / SARB42).